A 266-amino-acid chain; its full sequence is Vitamin B12-binding protein (266 aa).

Residues 1–22 form the signal peptide; sequence MAKSLFRALVALSFLAPLWLNA. Residues 25–266 form the Fe/B12 periplasmic-binding domain; the sequence is RVITLSPANT…QLCNALSQVD (242 aa). Residues Tyr50 and 242 to 246 contribute to the cyanocob(III)alamin site; that span reads DWFER. The cysteines at positions 183 and 259 are disulfide-linked.

The protein belongs to the BtuF family. In terms of assembly, the complex is composed of two ATP-binding proteins (BtuD), two transmembrane proteins (BtuC) and a solute-binding protein (BtuF).

The protein localises to the periplasm. Part of the ABC transporter complex BtuCDF involved in vitamin B12 import. Binds vitamin B12 and delivers it to the periplasmic surface of BtuC. This Escherichia coli (strain K12) protein is Vitamin B12-binding protein (btuF).